A 425-amino-acid polypeptide reads, in one-letter code: Homogentisate 1,2-dioxygenase (425 aa).

H283 (proton acceptor) is an active-site residue. Fe cation contacts are provided by H326 and E332. 2 residues coordinate homogentisate: Y341 and H362. H362 is a binding site for Fe cation.

This sequence belongs to the homogentisate dioxygenase family. Hexamer; dimer of trimers. The cofactor is Fe cation.

The enzyme catalyses homogentisate + O2 = 4-maleylacetoacetate + H(+). The protein operates within amino-acid degradation; L-phenylalanine degradation; acetoacetate and fumarate from L-phenylalanine: step 4/6. Its function is as follows. Involved in the catabolism of homogentisate (2,5-dihydroxyphenylacetate or 2,5-OH-PhAc), a central intermediate in the degradation of phenylalanine and tyrosine. Catalyzes the oxidative ring cleavage of the aromatic ring of homogentisate to yield maleylacetoacetate. This Caulobacter vibrioides (strain ATCC 19089 / CIP 103742 / CB 15) (Caulobacter crescentus) protein is Homogentisate 1,2-dioxygenase.